A 302-amino-acid polypeptide reads, in one-letter code: UDP-N-acetylenolpyruvoylglucosamine reductase (302 aa).

Residues 23–188 (KVGGNAEIFF…LKAVFKVNKG (166 aa)) form the FAD-binding PCMH-type domain. Arg168 is an active-site residue. Ser217 functions as the Proton donor in the catalytic mechanism. Glu287 is an active-site residue.

It belongs to the MurB family. FAD is required as a cofactor.

It is found in the cytoplasm. It catalyses the reaction UDP-N-acetyl-alpha-D-muramate + NADP(+) = UDP-N-acetyl-3-O-(1-carboxyvinyl)-alpha-D-glucosamine + NADPH + H(+). It functions in the pathway cell wall biogenesis; peptidoglycan biosynthesis. In terms of biological role, cell wall formation. The sequence is that of UDP-N-acetylenolpyruvoylglucosamine reductase from Rickettsia bellii (strain RML369-C).